Consider the following 219-residue polypeptide: Elongation factor Ts (219 aa).

The tract at residues 82–85 (TDFV) is involved in Mg(2+) ion dislocation from EF-Tu.

This sequence belongs to the EF-Ts family.

It is found in the cytoplasm. Functionally, associates with the EF-Tu.GDP complex and induces the exchange of GDP to GTP. It remains bound to the aminoacyl-tRNA.EF-Tu.GTP complex up to the GTP hydrolysis stage on the ribosome. The protein is Elongation factor Ts of Trichodesmium erythraeum (strain IMS101).